The sequence spans 213 residues: Kynurenine formamidase (213 aa).

Tryptophan 20 is a binding site for substrate. 3 residues coordinate Zn(2+): histidine 50, histidine 54, and aspartate 56. Catalysis depends on histidine 60, which acts as the Proton donor/acceptor. Zn(2+) contacts are provided by histidine 161 and glutamate 173.

The protein belongs to the Cyclase 1 superfamily. KynB family. As to quaternary structure, homodimer. It depends on Zn(2+) as a cofactor.

The enzyme catalyses N-formyl-L-kynurenine + H2O = L-kynurenine + formate + H(+). The protein operates within amino-acid degradation; L-tryptophan degradation via kynurenine pathway; L-kynurenine from L-tryptophan: step 2/2. Its function is as follows. Catalyzes the hydrolysis of N-formyl-L-kynurenine to L-kynurenine, the second step in the kynurenine pathway of tryptophan degradation. The protein is Kynurenine formamidase of Pseudomonas paraeruginosa (strain DSM 24068 / PA7) (Pseudomonas aeruginosa (strain PA7)).